A 61-amino-acid chain; its full sequence is Probable tautomerase lin2709 (61 aa).

P2 (proton acceptor; via imino nitrogen) is an active-site residue.

This sequence belongs to the 4-oxalocrotonate tautomerase family.

The chain is Probable tautomerase lin2709 from Listeria innocua serovar 6a (strain ATCC BAA-680 / CLIP 11262).